The primary structure comprises 160 residues: MGVFNYEAETPSVIPAARLFKSYVLDGDKLIPKVAPQVISSVENVGGNGGPGTIKNITFAEGIPFKFVKERVDEVDNANFKYNYTVIEGDVLGDKLEKVSHELKIVAAPGGGSIVKISSKFHAKGYHEVNAEKMKGAKEMAEKLLRAVESYLLAHTAEYN.

This sequence belongs to the BetVI family.

The protein is Major pollen allergen Car b 1 isoforms 1A and 1B of Carpinus betulus (European hornbeam).